Reading from the N-terminus, the 534-residue chain is Cytochrome P450 monooxygenase ascG (534 aa).

The chain crosses the membrane as a helical span at residues phenylalanine 13–isoleucine 33. An N-linked (GlcNAc...) asparagine glycan is attached at asparagine 466. Position 469 (cysteine 469) interacts with heme.

This sequence belongs to the cytochrome P450 family. It depends on heme as a cofactor.

The protein localises to the membrane. The enzyme catalyses ilicicolin C + NADPH + O2 + H(+) = ascochlorin + NADP(+) + 2 H2O. It participates in secondary metabolite biosynthesis; terpenoid biosynthesis. Functionally, cytochrome P450 monooxygenase; part of the asc-1 gene cluster that mediates the biosynthesis of both ascochlorin and ascofuranone, a strong inhibitor of cyanide-insensitive alternative oxidases and a promising drug candidate against African trypanosomiasis. The first step in the pathway is performed by the non-reducing polyketide synthase ascC that produces orsellinic acid by condensing acetyl-CoA with 3 malonyl-CoA units. Orsellinic acid is then prenylated by the prenyltransferase ascA to yield ilicicolinic acid B. Ilicicolinic acid B is further reduced to ilicicolin B by the reductase ascB. The halogenase ascD then chlorinates ilicicolin B to produce ilicicolin A which is converted to ilicicolin A epoxide by the cytochrome P450 monooxygenase ascE that catalyzes stereoselective epoxidation of the terminal double bond of the prenyl group. Ilicicolin A epoxide is the last common precursor for the biosynthesis of ascofuranone and ascochlorin. The terpene cyclase ascF produces a monocyclic terpene, and the cyclization reaction is proposed to be initiated by protonation of the terminal epoxide of ilicicolin A epoxide to generate a monocyclic tertiarycation, which is followed by a series of hydride and methyl shifts with abstraction of proton, leading to the formation of the (14S,15R,19R)-trimethylcyclohexanone ring structure of ilicicolin C, which is finally reduced to ascochlorin by the dehydrogenase ascG. On the other hand, ilicicolin A epoxide is hydroxylated by the cytochrome P450 monooxygenase ascH, and the resultant product is cyclized by the terpene cyclase ascI to ascofuranol via protonation-initiated epoxide ring opening, which facilitates the 6-endo-tet cyclization to form the tetrahy-drofuran ring. Finally, ascofuranol is oxidized into ascofuranone by ascJ. In Acremonium egyptiacum (Oospora egyptiaca), this protein is Cytochrome P450 monooxygenase ascG.